The following is a 122-amino-acid chain: Large ribosomal subunit protein bL12 (122 aa).

Belongs to the bacterial ribosomal protein bL12 family. Homodimer. Part of the ribosomal stalk of the 50S ribosomal subunit. Forms a multimeric L10(L12)X complex, where L10 forms an elongated spine to which 2 to 4 L12 dimers bind in a sequential fashion. Binds GTP-bound translation factors.

In terms of biological role, forms part of the ribosomal stalk which helps the ribosome interact with GTP-bound translation factors. Is thus essential for accurate translation. This is Large ribosomal subunit protein bL12 from Buchnera aphidicola subsp. Cinara cedri (strain Cc).